A 306-amino-acid chain; its full sequence is Pantothenate kinase (306 aa).

Position 90–97 (90–97) interacts with ATP; that stretch reads GSVAVGKS.

The protein belongs to the prokaryotic pantothenate kinase family.

It is found in the cytoplasm. The catalysed reaction is (R)-pantothenate + ATP = (R)-4'-phosphopantothenate + ADP + H(+). The protein operates within cofactor biosynthesis; coenzyme A biosynthesis; CoA from (R)-pantothenate: step 1/5. This Lactococcus lactis subsp. cremoris (strain MG1363) protein is Pantothenate kinase.